Here is a 327-residue protein sequence, read N- to C-terminus: Zinc transport protein ZntB (327 aa).

Over 1–273 (MEAIKGSEVN…SRRSYTMSLM (273 aa)) the chain is Cytoplasmic. Residues 274 to 294 (AMVFLPSTFLTGLFGVNLGGI) traverse the membrane as a helical segment. Residues 295–300 (PGGGWH) lie on the Periplasmic side of the membrane. The helical transmembrane segment at 301 to 321 (LGFSVFCVALVLLIGGVTWWL) threads the bilayer. Over 322-327 (HRSKWL) the chain is Cytoplasmic.

This sequence belongs to the CorA metal ion transporter (MIT) (TC 1.A.35) family.

Its subcellular location is the cell inner membrane. The enzyme catalyses Zn(2+)(out) + H(+)(out) = Zn(2+)(in) + H(+)(in). In terms of biological role, zinc transporter. Acts as a Zn(2+):proton symporter, which likely mediates zinc ion uptake. This is Zinc transport protein ZntB from Cronobacter sakazakii (strain ATCC BAA-894) (Enterobacter sakazakii).